The following is a 29-amino-acid chain: Cytochrome b6-f complex subunit 8 (29 aa).

The helical transmembrane segment at 3–23 threads the bilayer; it reads ILSLGWAALMTMFTFSLALTV.

The protein belongs to the PetN family. The 4 large subunits of the cytochrome b6-f complex are cytochrome b6, subunit IV (17 kDa polypeptide, PetD), cytochrome f and the Rieske protein, while the 4 small subunits are PetG, PetL, PetM and PetN. The complex functions as a dimer.

The protein resides in the plastid. It localises to the chloroplast thylakoid membrane. In terms of biological role, component of the cytochrome b6-f complex, which mediates electron transfer between photosystem II (PSII) and photosystem I (PSI), cyclic electron flow around PSI, and state transitions. The polypeptide is Cytochrome b6-f complex subunit 8 (Phaeodactylum tricornutum (strain CCAP 1055/1)).